Here is a 67-residue protein sequence, read N- to C-terminus: Prokaryotic ubiquitin-like protein Pup (67 aa).

Residues 1-36 (MPQQFEQPQAQQAATQEDDALATTQAAAQTESADQA) form a disordered region. Positions 23–61 (TTQAAAQTESADQADVLDDILDDIESTLETNAEEYVNSF) are ARC ATPase binding. An Isoglutamyl lysine isopeptide (Glu-Lys) (interchain with K-? in acceptor proteins) cross-link involves residue glutamate 67.

Belongs to the prokaryotic ubiquitin-like protein family. As to quaternary structure, strongly interacts with the proteasome-associated ATPase ARC through a hydrophobic interface; the interacting region of Pup lies in its C-terminal half. There is one Pup binding site per ARC hexamer ring.

Its pathway is protein degradation; proteasomal Pup-dependent pathway. Its function is as follows. Protein modifier that is covalently attached to lysine residues of substrate proteins, thereby targeting them for proteasomal degradation. The tagging system is termed pupylation. The sequence is that of Prokaryotic ubiquitin-like protein Pup from Bifidobacterium longum (strain DJO10A).